The chain runs to 1141 residues: Membrane-associated protein gex-3 (1141 aa).

Belongs to the HEM-1/HEM-2 family. Interacts with aco-1, gei-13 and gex-2. Interacts with gex-3. In terms of tissue distribution, expressed in neurons.

The protein resides in the cytoplasm. In terms of biological role, rac effector required for tissue morphogenesis, cell migrations and egg laying. May play a role in egg laying and in yolk protein clatherin-mediated endocytosis by oocytes during oogenesis. Plays a role in the formation of gap junctions between EA and EP endodermal precursor cells in embryos. The sequence is that of Membrane-associated protein gex-3 from Caenorhabditis elegans.